Consider the following 454-residue polypeptide: Probable ECA polymerase (454 aa).

Transmembrane regions (helical) follow at residues 6–26 (FSGLFIVWLLATLFIGTLTWF), 37–57 (VFFSLLFLLTFFFGFPLTSIL), 63–83 (VAVVPAEVLLQALLSAGCFYA), 122–142 (MMAVALVSVGIFFMHNGFLLF), 157–177 (GVALKRFFYFFIPAMLVVYFL), 183–203 (AWLFFLVSTVGFGLLTYMIVG), 209–229 (IIIAFAIFLFIGIIRGWISPG), 230–250 (MLAAAGVMGIVGMFWLALKRY), 343–363 (LVVMGGVWFIPPGAVVVGLII), 380–400 (YKAAILHSFCFGAIFNMIVLA), and 411–431 (VIFFMVVFGACLVVAKLIYWL).

It belongs to the WzyE family. As to quaternary structure, probably part of a complex composed of WzxE, WzyE and WzzE.

It is found in the cell inner membrane. Its pathway is bacterial outer membrane biogenesis; enterobacterial common antigen biosynthesis. In terms of biological role, probably involved in the polymerization of enterobacterial common antigen (ECA) trisaccharide repeat units. This is Probable ECA polymerase from Cronobacter sakazakii (strain ATCC BAA-894) (Enterobacter sakazakii).